Reading from the N-terminus, the 111-residue chain is Cornifelin (111 aa).

It belongs to the cornifelin family. As to quaternary structure, directly or indirectly cross-linked to CE proteins loricin and involucrin (IVL).

The protein resides in the cytoplasm. Part of the insoluble cornified cell envelope (CE) of stratified squamous epithelia. The chain is Cornifelin (CNFN) from Bos taurus (Bovine).